Here is a 219-residue protein sequence, read N- to C-terminus: Ribose-5-phosphate isomerase A (219 aa).

Substrate-binding positions include 28 to 31 (TGST), 81 to 84 (DGAD), and 94 to 97 (KGGG). Residue Glu103 is the Proton acceptor of the active site. Position 121 (Lys121) interacts with substrate.

The protein belongs to the ribose 5-phosphate isomerase family. As to quaternary structure, homodimer.

It carries out the reaction aldehydo-D-ribose 5-phosphate = D-ribulose 5-phosphate. It functions in the pathway carbohydrate degradation; pentose phosphate pathway; D-ribose 5-phosphate from D-ribulose 5-phosphate (non-oxidative stage): step 1/1. Functionally, catalyzes the reversible conversion of ribose-5-phosphate to ribulose 5-phosphate. The polypeptide is Ribose-5-phosphate isomerase A (Erwinia tasmaniensis (strain DSM 17950 / CFBP 7177 / CIP 109463 / NCPPB 4357 / Et1/99)).